We begin with the raw amino-acid sequence, 139 residues long: MKEFDQLLSVESDAYISSKEQGIDDGKRLGYVEGYQLGFEKGIELGQEIGYYQSCVTVWNHLVSINNNNNNNNNNNKNNLKFSVRGIQNLEKLTKLLEDYHLDFNDENIMNTLSEIRLKFKLTSVQLGLQTKENDELSF.

The protein belongs to the LTO1 family.

This chain is Protein LTO1 homolog, found in Dictyostelium discoideum (Social amoeba).